Consider the following 504-residue polypeptide: Maturase K (504 aa).

This sequence belongs to the intron maturase 2 family. MatK subfamily.

The protein resides in the plastid. It localises to the chloroplast. Functionally, usually encoded in the trnK tRNA gene intron. Probably assists in splicing its own and other chloroplast group II introns. This is Maturase K from Thlaspi arvense (Field penny-cress).